The primary structure comprises 102 residues: MSDQATTLKIKPLGDRILVKREEEASTARGGIILPDTAKKKQDRAEVLALGTGKKDDKGQQLPFEVQVGNIVLIDKYSGQELTVEGEEYVIVQMSEVIAVLQ.

This sequence belongs to the GroES chaperonin family. As to quaternary structure, heptamer of 7 subunits arranged in a ring. Interacts with the chaperonin GroEL.

It is found in the cytoplasm. Its function is as follows. Together with the chaperonin GroEL, plays an essential role in assisting protein folding. The GroEL-GroES system forms a nano-cage that allows encapsulation of the non-native substrate proteins and provides a physical environment optimized to promote and accelerate protein folding. GroES binds to the apical surface of the GroEL ring, thereby capping the opening of the GroEL channel. The sequence is that of Co-chaperonin GroES from Chlamydia trachomatis serovar D (strain ATCC VR-885 / DSM 19411 / UW-3/Cx).